Consider the following 240-residue polypeptide: Uridylate kinase (240 aa).

13–16 (KASG) serves as a coordination point for ATP. Residues 21–26 (GSQGFG) are involved in allosteric activation by GTP. Residue Gly55 participates in UMP binding. Positions 56 and 60 each coordinate ATP. UMP is bound by residues Asp75 and 136-143 (TGNPFFTT). Residues Thr163, Gln164, Tyr169, and Asp172 each coordinate ATP.

This sequence belongs to the UMP kinase family. In terms of assembly, homohexamer.

The protein localises to the cytoplasm. It catalyses the reaction UMP + ATP = UDP + ADP. It functions in the pathway pyrimidine metabolism; CTP biosynthesis via de novo pathway; UDP from UMP (UMPK route): step 1/1. Its activity is regulated as follows. Allosterically activated by GTP. Inhibited by UTP. In terms of biological role, catalyzes the reversible phosphorylation of UMP to UDP. This chain is Uridylate kinase, found in Brucella anthropi (strain ATCC 49188 / DSM 6882 / CCUG 24695 / JCM 21032 / LMG 3331 / NBRC 15819 / NCTC 12168 / Alc 37) (Ochrobactrum anthropi).